Here is a 282-residue protein sequence, read N- to C-terminus: MEIVLAKRAGFCFGVKRATQMAFEAAEKEGETFTLGPIIHSPQVVQRLEGMGVKVLSDLEGIGNGTVIIRSHGVTSAELEDAVRRQLEVVDATCPFVKKAQEHVKRLSHDGYTVVVVGDADHPEVQGIVSYAEGPVHVVGSGEEAARLPNMKKVGVVAQTTQSFETLKNVVKECLLKGGEIRVFNTICDATAVRQDEAKALAREVDCMIVIGGFNSANTKRLAEVCSELQPRTYHIETAQELDASWFQGVERVGVTAGASTPKWLIDEVIERIQEFDNKKKG.

C12 lines the [4Fe-4S] cluster pocket. (2E)-4-hydroxy-3-methylbut-2-enyl diphosphate contacts are provided by H40 and H72. 2 residues coordinate dimethylallyl diphosphate: H40 and H72. Residues H40 and H72 each contribute to the isopentenyl diphosphate site. C94 provides a ligand contact to [4Fe-4S] cluster. H122 is a binding site for (2E)-4-hydroxy-3-methylbut-2-enyl diphosphate. A dimethylallyl diphosphate-binding site is contributed by H122. H122 provides a ligand contact to isopentenyl diphosphate. The active-site Proton donor is E124. T160 is a (2E)-4-hydroxy-3-methylbut-2-enyl diphosphate binding site. Residue C188 participates in [4Fe-4S] cluster binding. Positions 216, 218, and 260 each coordinate (2E)-4-hydroxy-3-methylbut-2-enyl diphosphate. Dimethylallyl diphosphate contacts are provided by S216, N218, and S260. The isopentenyl diphosphate site is built by S216, N218, and S260.

The protein belongs to the IspH family. Requires [4Fe-4S] cluster as cofactor.

It carries out the reaction isopentenyl diphosphate + 2 oxidized [2Fe-2S]-[ferredoxin] + H2O = (2E)-4-hydroxy-3-methylbut-2-enyl diphosphate + 2 reduced [2Fe-2S]-[ferredoxin] + 2 H(+). The enzyme catalyses dimethylallyl diphosphate + 2 oxidized [2Fe-2S]-[ferredoxin] + H2O = (2E)-4-hydroxy-3-methylbut-2-enyl diphosphate + 2 reduced [2Fe-2S]-[ferredoxin] + 2 H(+). It participates in isoprenoid biosynthesis; dimethylallyl diphosphate biosynthesis; dimethylallyl diphosphate from (2E)-4-hydroxy-3-methylbutenyl diphosphate: step 1/1. Its pathway is isoprenoid biosynthesis; isopentenyl diphosphate biosynthesis via DXP pathway; isopentenyl diphosphate from 1-deoxy-D-xylulose 5-phosphate: step 6/6. Catalyzes the conversion of 1-hydroxy-2-methyl-2-(E)-butenyl 4-diphosphate (HMBPP) into a mixture of isopentenyl diphosphate (IPP) and dimethylallyl diphosphate (DMAPP). Acts in the terminal step of the DOXP/MEP pathway for isoprenoid precursor biosynthesis. The polypeptide is 4-hydroxy-3-methylbut-2-enyl diphosphate reductase (Geobacter sulfurreducens (strain ATCC 51573 / DSM 12127 / PCA)).